Consider the following 271-residue polypeptide: 4-hydroxy-tetrahydrodipicolinate reductase (271 aa).

NAD(+) is bound by residues 10 to 15, Glu-36, 100 to 102, and 124 to 127; these read GAGGRM, GTT, and SGNM. His-157 serves as the catalytic Proton donor/acceptor. His-158 provides a ligand contact to (S)-2,3,4,5-tetrahydrodipicolinate. Catalysis depends on Lys-161, which acts as the Proton donor. Residue 167–168 participates in (S)-2,3,4,5-tetrahydrodipicolinate binding; the sequence is GT.

The protein belongs to the DapB family.

Its subcellular location is the cytoplasm. It catalyses the reaction (S)-2,3,4,5-tetrahydrodipicolinate + NAD(+) + H2O = (2S,4S)-4-hydroxy-2,3,4,5-tetrahydrodipicolinate + NADH + H(+). The enzyme catalyses (S)-2,3,4,5-tetrahydrodipicolinate + NADP(+) + H2O = (2S,4S)-4-hydroxy-2,3,4,5-tetrahydrodipicolinate + NADPH + H(+). Its pathway is amino-acid biosynthesis; L-lysine biosynthesis via DAP pathway; (S)-tetrahydrodipicolinate from L-aspartate: step 4/4. Catalyzes the conversion of 4-hydroxy-tetrahydrodipicolinate (HTPA) to tetrahydrodipicolinate. This Bradyrhizobium diazoefficiens (strain JCM 10833 / BCRC 13528 / IAM 13628 / NBRC 14792 / USDA 110) protein is 4-hydroxy-tetrahydrodipicolinate reductase.